The primary structure comprises 407 residues: Arginine deiminase (407 aa).

Cysteine 397 functions as the Amidino-cysteine intermediate in the catalytic mechanism.

Belongs to the arginine deiminase family.

It is found in the cytoplasm. It carries out the reaction L-arginine + H2O = L-citrulline + NH4(+). It participates in amino-acid degradation; L-arginine degradation via ADI pathway; carbamoyl phosphate from L-arginine: step 1/2. This chain is Arginine deiminase, found in Vibrio cholerae serotype O1 (strain ATCC 39541 / Classical Ogawa 395 / O395).